Consider the following 545-residue polypeptide: tRNA-2-methylthio-N(6)-dimethylallyladenosine synthase (545 aa).

Positions 1 to 32 (MSSASPLARCCDEATPSAGPRAAQPPYHGPVT) are disordered. The 117-residue stretch at 58–174 (RTYQVRTYGC…LPTLLERARH (117 aa)) folds into the MTTase N-terminal domain. [4Fe-4S] cluster-binding residues include Cys-67, Cys-103, Cys-137, Cys-211, Cys-215, and Cys-218. The Radical SAM core domain occupies 197-433 (RESAYAAWVS…IALQEQISLE (237 aa)). The TRAM domain occupies 436 to 504 (RALVGQAVEV…PHHLIADAGV (69 aa)).

It belongs to the methylthiotransferase family. MiaB subfamily. In terms of assembly, monomer. [4Fe-4S] cluster is required as a cofactor.

The protein resides in the cytoplasm. The catalysed reaction is N(6)-dimethylallyladenosine(37) in tRNA + (sulfur carrier)-SH + AH2 + 2 S-adenosyl-L-methionine = 2-methylsulfanyl-N(6)-dimethylallyladenosine(37) in tRNA + (sulfur carrier)-H + 5'-deoxyadenosine + L-methionine + A + S-adenosyl-L-homocysteine + 2 H(+). Catalyzes the methylthiolation of N6-(dimethylallyl)adenosine (i(6)A), leading to the formation of 2-methylthio-N6-(dimethylallyl)adenosine (ms(2)i(6)A) at position 37 in tRNAs that read codons beginning with uridine. This Mycobacterium bovis (strain BCG / Pasteur 1173P2) protein is tRNA-2-methylthio-N(6)-dimethylallyladenosine synthase.